The chain runs to 447 residues: Adenylosuccinate synthetase (447 aa).

GTP contacts are provided by residues Gly-12–Lys-18 and Gly-40–Thr-42. The Proton acceptor role is filled by Asp-13. Mg(2+) contacts are provided by Asp-13 and Gly-40. IMP contacts are provided by residues Asp-13–Lys-16, Asn-38–His-41, Thr-128, Arg-142, Gln-223, Thr-238, and Arg-302. His-41 serves as the catalytic Proton donor. Thr-298–Arg-304 is a binding site for substrate. GTP contacts are provided by residues Arg-304, Lys-330 to Asp-332, and Ser-412 to Gly-414.

This sequence belongs to the adenylosuccinate synthetase family. Homodimer. It depends on Mg(2+) as a cofactor.

The protein localises to the cytoplasm. The catalysed reaction is IMP + L-aspartate + GTP = N(6)-(1,2-dicarboxyethyl)-AMP + GDP + phosphate + 2 H(+). It participates in purine metabolism; AMP biosynthesis via de novo pathway; AMP from IMP: step 1/2. Functionally, plays an important role in the de novo pathway of purine nucleotide biosynthesis. Catalyzes the first committed step in the biosynthesis of AMP from IMP. The protein is Adenylosuccinate synthetase of Thermosynechococcus vestitus (strain NIES-2133 / IAM M-273 / BP-1).